Here is a 607-residue protein sequence, read N- to C-terminus: (R)-limonene synthase 1, chloroplastic (607 aa).

A chloroplast-targeting transit peptide spans 1–52 (MSSCINPSTLATSVNGFKCLPLATNRAAIRIMAKNKPVQCLVSTKYDNLTVD). Aspartate 343 and aspartate 347 together coordinate Mn(2+). Residues aspartate 343, aspartate 347, arginine 485, aspartate 488, and lysine 504 each coordinate substrate. The short motif at 343–347 (DDIYD) is the DDXXD motif element. Mn(2+) is bound at residue aspartate 488.

It belongs to the terpene synthase family. It depends on Mg(2+) as a cofactor. Mn(2+) serves as cofactor.

It is found in the plastid. The protein resides in the chloroplast. It carries out the reaction (2E)-geranyl diphosphate = (4R)-limonene + diphosphate. Its activity is regulated as follows. Inhibited by 2-fluorogeranyl diphosphate (FGPP) and 2-fluoroneryl diphosphate (FNPP). In terms of biological role, catalyzes the conversion of geranyl diphosphate to (+)-(4R)-limonene. Produces exclusively the (+)-enantiomer. Can use neryl diphosphate as substrate. Has no activity with farnesyl diphosphate. This Citrus sinensis (Sweet orange) protein is (R)-limonene synthase 1, chloroplastic.